A 596-amino-acid polypeptide reads, in one-letter code: Proline--tRNA ligase (596 aa).

This sequence belongs to the class-II aminoacyl-tRNA synthetase family. ProS type 1 subfamily. As to quaternary structure, homodimer.

Its subcellular location is the cytoplasm. The catalysed reaction is tRNA(Pro) + L-proline + ATP = L-prolyl-tRNA(Pro) + AMP + diphosphate. Catalyzes the attachment of proline to tRNA(Pro) in a two-step reaction: proline is first activated by ATP to form Pro-AMP and then transferred to the acceptor end of tRNA(Pro). As ProRS can inadvertently accommodate and process non-cognate amino acids such as alanine and cysteine, to avoid such errors it has two additional distinct editing activities against alanine. One activity is designated as 'pretransfer' editing and involves the tRNA(Pro)-independent hydrolysis of activated Ala-AMP. The other activity is designated 'posttransfer' editing and involves deacylation of mischarged Ala-tRNA(Pro). The misacylated Cys-tRNA(Pro) is not edited by ProRS. The polypeptide is Proline--tRNA ligase (Prochlorococcus marinus (strain NATL1A)).